Here is a 743-residue protein sequence, read N- to C-terminus: Neutral ceramidase (743 aa).

The Cytoplasmic segment spans residues 1 to 14; it reads MASKSRRLSGLEIS. A helical; Signal-anchor for type II membrane protein membrane pass occupies residues 15–35; the sequence is LIVLFLLMTAVSVALITVLAL. Over 36 to 743 the chain is Lumenal; it reads KQESDKKEEV…FKVARSFYYF (708 aa). The disordered stretch occupies residues 40 to 60; that stretch reads DKKEEVTPEEPSPSVTPPEKP. Residues 49 to 59 show a composition bias toward pro residues; that stretch reads EPSPSVTPPEK. Residues His151 and His260 each contribute to the Zn(2+) site. N-linked (GlcNAc...) asparagine glycosylation occurs at Asn265. Catalysis depends on Ser312, which acts as the Nucleophile. 2 disulfide bridges follow: Cys320–Cys334 and Cys327–Cys342. Asn331, Asn389, Asn398, and Asn451 each carry an N-linked (GlcNAc...) asparagine glycan. A disulfide bond links Cys406 and Cys456. The Zn(2+) site is built by Glu498 and Tyr538. Asn661 carries N-linked (GlcNAc...) asparagine glycosylation. The Ca(2+) site is built by Asp672, Ser674, and Thr677. A glycan (N-linked (GlcNAc...) asparagine) is linked at Asn720.

The protein belongs to the neutral ceramidase family. Zn(2+) is required as a cofactor. In terms of processing, N-glycosylated. Post-translationally, O-glycosylated. Detected in intestine (at protein level).

The protein resides in the cell membrane. Its subcellular location is the membrane raft. The protein localises to the membrane. It is found in the caveola. It localises to the golgi apparatus membrane. The protein resides in the mitochondrion. Its subcellular location is the secreted. The protein localises to the extracellular exosome. It carries out the reaction an N-acylsphing-4-enine + H2O = sphing-4-enine + a fatty acid. The catalysed reaction is N-dodecanoylsphing-4-enine + H2O = dodecanoate + sphing-4-enine. Its pathway is lipid metabolism; sphingolipid metabolism. In terms of biological role, plasma membrane ceramidase that hydrolyzes sphingolipid ceramides into sphingosine and free fatty acids at neutral pH. Ceramides, sphingosine, and its phosphorylated form sphingosine-1-phosphate are bioactive lipids that mediate cellular signaling pathways regulating several biological processes including cell proliferation, apoptosis and differentiation. Also catalyzes the reverse reaction allowing the synthesis of ceramides from fatty acids and sphingosine. Together with sphingomyelinase, participates in the production of sphingosine and sphingosine-1-phosphate from the degradation of sphingomyelin, a sphingolipid enriched in the plasma membrane of cells. Also participates in the hydrolysis of ceramides from the extracellular milieu allowing the production of sphingosine-1-phosphate inside and outside cells. The chain is Neutral ceramidase (asah2) from Danio rerio (Zebrafish).